Consider the following 399-residue polypeptide: Dual-specificity RNA methyltransferase RlmN (399 aa).

The active-site Proton acceptor is the E121. The 250-residue stretch at 127–376 (DVDRGTLCVS…VRTPRGRDIL (250 aa)) folds into the Radical SAM core domain. An intrachain disulfide couples C134 to C379. C141, C145, and C148 together coordinate [4Fe-4S] cluster. S-adenosyl-L-methionine contacts are provided by residues 205–206 (GE), S237, 259–261 (SLH), and N336. C379 functions as the S-methylcysteine intermediate in the catalytic mechanism.

This sequence belongs to the radical SAM superfamily. RlmN family. It depends on [4Fe-4S] cluster as a cofactor.

It localises to the cytoplasm. It catalyses the reaction adenosine(2503) in 23S rRNA + 2 reduced [2Fe-2S]-[ferredoxin] + 2 S-adenosyl-L-methionine = 2-methyladenosine(2503) in 23S rRNA + 5'-deoxyadenosine + L-methionine + 2 oxidized [2Fe-2S]-[ferredoxin] + S-adenosyl-L-homocysteine. It carries out the reaction adenosine(37) in tRNA + 2 reduced [2Fe-2S]-[ferredoxin] + 2 S-adenosyl-L-methionine = 2-methyladenosine(37) in tRNA + 5'-deoxyadenosine + L-methionine + 2 oxidized [2Fe-2S]-[ferredoxin] + S-adenosyl-L-homocysteine. Functionally, specifically methylates position 2 of adenine 2503 in 23S rRNA and position 2 of adenine 37 in tRNAs. m2A2503 modification seems to play a crucial role in the proofreading step occurring at the peptidyl transferase center and thus would serve to optimize ribosomal fidelity. This Methylocella silvestris (strain DSM 15510 / CIP 108128 / LMG 27833 / NCIMB 13906 / BL2) protein is Dual-specificity RNA methyltransferase RlmN.